A 234-amino-acid polypeptide reads, in one-letter code: HTH-type transcriptional regulator SmoD (234 aa).

The region spanning 8 to 76 (LPMYMQIAEM…QGSGNYIRAV (69 aa)) is the HTH gntR-type domain. The segment at residues 36 to 55 (ERDMAADLGIAVGTLRKSLA) is a DNA-binding region (H-T-H motif).

The protein resides in the cytoplasm. Its function is as follows. Probably regulates expression of genes involved in the sulfoquinovose monooxygenase (sulfo-SMO) pathway (smoABCDEFGHI). The protein is HTH-type transcriptional regulator SmoD of Agrobacterium fabrum (strain C58 / ATCC 33970) (Agrobacterium tumefaciens (strain C58)).